The following is a 201-amino-acid chain: Large ribosomal subunit protein uL4 (201 aa).

The tract at residues 39–72 (RRGTASTKTRAQVSKSGKKMYSQKGTGNARHGDR) is disordered. A compositionally biased stretch (polar residues) spans 42–53 (TASTKTRAQVSK).

Belongs to the universal ribosomal protein uL4 family. In terms of assembly, part of the 50S ribosomal subunit.

Functionally, one of the primary rRNA binding proteins, this protein initially binds near the 5'-end of the 23S rRNA. It is important during the early stages of 50S assembly. It makes multiple contacts with different domains of the 23S rRNA in the assembled 50S subunit and ribosome. Forms part of the polypeptide exit tunnel. This chain is Large ribosomal subunit protein uL4, found in Deinococcus deserti (strain DSM 17065 / CIP 109153 / LMG 22923 / VCD115).